The primary structure comprises 376 residues: Succinyl-diaminopimelate desuccinylase (376 aa).

His-67 is a binding site for Zn(2+). The active site involves Asp-69. Asp-100 is a Zn(2+) binding site. Glu-134 serves as the catalytic Proton acceptor. 3 residues coordinate Zn(2+): Glu-135, Glu-163, and His-349.

Belongs to the peptidase M20A family. DapE subfamily. As to quaternary structure, homodimer. Requires Zn(2+) as cofactor. Co(2+) serves as cofactor.

It carries out the reaction N-succinyl-(2S,6S)-2,6-diaminopimelate + H2O = (2S,6S)-2,6-diaminopimelate + succinate. Its pathway is amino-acid biosynthesis; L-lysine biosynthesis via DAP pathway; LL-2,6-diaminopimelate from (S)-tetrahydrodipicolinate (succinylase route): step 3/3. Functionally, catalyzes the hydrolysis of N-succinyl-L,L-diaminopimelic acid (SDAP), forming succinate and LL-2,6-diaminopimelate (DAP), an intermediate involved in the bacterial biosynthesis of lysine and meso-diaminopimelic acid, an essential component of bacterial cell walls. The protein is Succinyl-diaminopimelate desuccinylase of Actinobacillus succinogenes (strain ATCC 55618 / DSM 22257 / CCUG 43843 / 130Z).